The sequence spans 20 residues: Flagellar filament 33 kDa core protein (20 aa).

It belongs to the bacterial flagellin family. In terms of assembly, the flagellum consists of an outer layer composed of repeating units of FlaA around a core that contains one or all of five antigenically related polypeptides.

It localises to the periplasmic flagellum. Its subcellular location is the periplasm. Functionally, component of the core of the flagella. This is Flagellar filament 33 kDa core protein from Spirochaeta aurantia.